Consider the following 454-residue polypeptide: Glutamyl-tRNA reductase (454 aa).

Residues 49–52, Ser109, 114–116, and Gln120 contribute to the substrate site; these read TCNR and ETQ. The active-site Nucleophile is the Cys50. NADP(+) is bound at residue 189-194; the sequence is GAGKMG.

It belongs to the glutamyl-tRNA reductase family. As to quaternary structure, homodimer.

It carries out the reaction (S)-4-amino-5-oxopentanoate + tRNA(Glu) + NADP(+) = L-glutamyl-tRNA(Glu) + NADPH + H(+). It functions in the pathway porphyrin-containing compound metabolism; protoporphyrin-IX biosynthesis; 5-aminolevulinate from L-glutamyl-tRNA(Glu): step 1/2. In terms of biological role, catalyzes the NADPH-dependent reduction of glutamyl-tRNA(Glu) to glutamate 1-semialdehyde (GSA). In Geobacillus kaustophilus (strain HTA426), this protein is Glutamyl-tRNA reductase.